The sequence spans 156 residues: Organelle RRM domain-containing protein 2, mitochondrial (156 aa).

The transit peptide at 1-28 directs the protein to the mitochondrion; the sequence is MAMAMRLPAISRAVTEVASAPVGLRRLF. The RRM domain occupies 56-134; sequence TNLFVSGLSK…WVIFAEYARP (79 aa). Ser-64 bears the Phosphoserine mark. The segment covering 137–148 has biased composition (polar residues); it reads QSQSYQPQNNMS. The disordered stretch occupies residues 137-156; sequence QSQSYQPQNNMSRPPYYGNR.

Interacts with RBG3/ORRM3. Binds to RBG2/ORRM5.

Its subcellular location is the mitochondrion. Functionally, involved in C-to-U editing of mitochondrial RNA. Functions as minor mitochondrial editing factor. Controls 6 percent of the mitochondrial editing sites. The polypeptide is Organelle RRM domain-containing protein 2, mitochondrial (Arabidopsis thaliana (Mouse-ear cress)).